Reading from the N-terminus, the 135-residue chain is Small ribosomal subunit protein uS11 (135 aa).

It belongs to the universal ribosomal protein uS11 family. As to quaternary structure, part of the 30S ribosomal subunit. Interacts with proteins S7 and S18. Binds to IF-3.

Functionally, located on the platform of the 30S subunit, it bridges several disparate RNA helices of the 16S rRNA. Forms part of the Shine-Dalgarno cleft in the 70S ribosome. The sequence is that of Small ribosomal subunit protein uS11 from Polynucleobacter asymbioticus (strain DSM 18221 / CIP 109841 / QLW-P1DMWA-1) (Polynucleobacter necessarius subsp. asymbioticus).